A 359-amino-acid polypeptide reads, in one-letter code: Alanine racemase (359 aa).

Lysine 35 serves as the catalytic Proton acceptor; specific for D-alanine. Lysine 35 bears the N6-(pyridoxal phosphate)lysine mark. Arginine 130 provides a ligand contact to substrate. Tyrosine 255 functions as the Proton acceptor; specific for L-alanine in the catalytic mechanism. Methionine 303 contacts substrate.

The protein belongs to the alanine racemase family. Requires pyridoxal 5'-phosphate as cofactor.

It catalyses the reaction L-alanine = D-alanine. It functions in the pathway amino-acid biosynthesis; D-alanine biosynthesis; D-alanine from L-alanine: step 1/1. Its function is as follows. Catalyzes the interconversion of L-alanine and D-alanine. May also act on other amino acids. The protein is Alanine racemase (alr) of Janthinobacterium sp. (strain Marseille) (Minibacterium massiliensis).